Reading from the N-terminus, the 143-residue chain is Large ribosomal subunit protein uL11 (143 aa).

Belongs to the universal ribosomal protein uL11 family. Part of the ribosomal stalk of the 50S ribosomal subunit. Interacts with L10 and the large rRNA to form the base of the stalk. L10 forms an elongated spine to which L12 dimers bind in a sequential fashion forming a multimeric L10(L12)X complex. Post-translationally, one or more lysine residues are methylated.

In terms of biological role, forms part of the ribosomal stalk which helps the ribosome interact with GTP-bound translation factors. The chain is Large ribosomal subunit protein uL11 from Marinobacter nauticus (strain ATCC 700491 / DSM 11845 / VT8) (Marinobacter aquaeolei).